We begin with the raw amino-acid sequence, 48 residues long: Glycine-rich RNA-binding protein 2 (48 aa).

The chain is Glycine-rich RNA-binding protein 2 from Populus euphratica (Euphrates poplar).